Consider the following 952-residue polypeptide: Leucine--tRNA ligase (952 aa).

The 'HIGH' region signature appears at 66–77; the sequence is PYPSGAGLHVGH. Positions 722–726 match the 'KMSKS' region motif; it reads KMGKS. Lys725 contributes to the ATP binding site.

It belongs to the class-I aminoacyl-tRNA synthetase family.

Its subcellular location is the cytoplasm. The enzyme catalyses tRNA(Leu) + L-leucine + ATP = L-leucyl-tRNA(Leu) + AMP + diphosphate. The sequence is that of Leucine--tRNA ligase from Corynebacterium glutamicum (strain R).